Reading from the N-terminus, the 507-residue chain is DNA ligase B (507 aa).

A not required for adenylyltransferase activity, required for nick joining region spans residues 1–172 (MLLHDVAITS…AAAAGLSGAA (172 aa)). ATP is bound at residue Glu-209. Lys-211 (N6-AMP-lysine intermediate) is an active-site residue. Positions 216, 231, 260, 300, 372, and 378 each coordinate ATP.

Belongs to the ATP-dependent DNA ligase family. As to quaternary structure, monomer. Mg(2+) serves as cofactor.

It catalyses the reaction ATP + (deoxyribonucleotide)n-3'-hydroxyl + 5'-phospho-(deoxyribonucleotide)m = (deoxyribonucleotide)n+m + AMP + diphosphate.. In terms of biological role, DNA ligase that seals nicks in double-stranded DNA during DNA replication, DNA recombination and DNA repair. This Mycobacterium tuberculosis (strain ATCC 25618 / H37Rv) protein is DNA ligase B (ligB).